Reading from the N-terminus, the 309-residue chain is Porphobilinogen deaminase (309 aa).

Cys-242 carries the post-translational modification S-(dipyrrolylmethanemethyl)cysteine.

Belongs to the HMBS family. Monomer. Dipyrromethane is required as a cofactor.

The catalysed reaction is 4 porphobilinogen + H2O = hydroxymethylbilane + 4 NH4(+). It functions in the pathway porphyrin-containing compound metabolism; protoporphyrin-IX biosynthesis; coproporphyrinogen-III from 5-aminolevulinate: step 2/4. In terms of biological role, tetrapolymerization of the monopyrrole PBG into the hydroxymethylbilane pre-uroporphyrinogen in several discrete steps. The protein is Porphobilinogen deaminase of Shewanella woodyi (strain ATCC 51908 / MS32).